A 321-amino-acid polypeptide reads, in one-letter code: Taste receptor type 2 member 135 (321 aa).

The Extracellular portion of the chain corresponds to 1–28 (MGPIMSTGETSTAHTVLGCQITDKTVIT). The helical transmembrane segment at 29–49 (LFVILVFSCLVAVVGNGFIII) threads the bilayer. At 50 to 75 (ALGMKWLLRRTLSAHNKLLISLAASR) the chain is on the cytoplasmic side. The helical transmembrane segment at 76-96 (FCLQCVVIGKNIYVFLNPSSF) threads the bilayer. Topologically, residues 97–106 (PYNPVIQLLN) are extracellular. Residues 107-127 (LMWDFLTAATIWFCSLLGFFY) traverse the membrane as a helical segment. Residues 128 to 149 (CVKIATLTHPVFVWLKYRLPGW) are Cytoplasmic-facing. The helical transmembrane segment at 150-170 (VPWMLLSAVGMSSLTSILCFI) threads the bilayer. Residues 171-207 (GNHMIYQNYARRGHQPWNATGNSLRHSLEKFYFISIK) are Extracellular-facing. N-linked (GlcNAc...) asparagine glycosylation occurs at N188. Residues 208-228 (IIMWTVPTVIFSIFMSLLLVS) form a helical membrane-spanning segment. Residues 229-253 (LVRHMKKTLLALSELRDVWAQAHFK) are Cytoplasmic-facing. The chain crosses the membrane as a helical span at residues 254 to 274 (ALLPLLSFIILFISCFLTLVL). The Extracellular portion of the chain corresponds to 275–286 (SSASSTPYQEFR). A helical membrane pass occupies residues 287–307 (YWMWQVVIHLCTVIHPIVILL). Residues 308-321 (SNPVLRVVMKRGCC) lie on the Cytoplasmic side of the membrane.

Belongs to the G-protein coupled receptor T2R family.

The protein resides in the membrane. Its function is as follows. Putative taste receptor which may play a role in the perception of bitterness. The protein is Taste receptor type 2 member 135 of Rattus norvegicus (Rat).